A 69-amino-acid chain; its full sequence is Brevinin-1Pb (69 aa).

An N-terminal signal peptide occupies residues 1 to 20 (MFTLNKFLLLLFFLGTINLS). A propeptide spanning residues 21–43 (FCEEENAEEERIDEPDETDVEVE) is cleaved from the precursor. Cysteines 63 and 69 form a disulfide.

In terms of tissue distribution, expressed by the skin glands.

The protein resides in the secreted. In terms of biological role, antibacterial activity against Gram-positive bacterium S.aureus and Gram-negative bacterium E.coli. Has activity against C.albicans. The protein is Brevinin-1Pb of Lithobates pipiens (Northern leopard frog).